We begin with the raw amino-acid sequence, 360 residues long: Peptide chain release factor 1 (360 aa).

Position 235 is an N5-methylglutamine (Gln-235). The segment at 281–310 (AERQRQDAAQAESRRLQVGSGDRSQRIRTY) is disordered.

It belongs to the prokaryotic/mitochondrial release factor family. In terms of processing, methylated by PrmC. Methylation increases the termination efficiency of RF1.

The protein localises to the cytoplasm. Functionally, peptide chain release factor 1 directs the termination of translation in response to the peptide chain termination codons UAG and UAA. This is Peptide chain release factor 1 from Stenotrophomonas maltophilia (strain R551-3).